Consider the following 454-residue polypeptide: Neuraminidase (454 aa).

Residues Met1–Lys6 are Intravirion-facing. The helical transmembrane segment at Ile7–Gly27 threads the bilayer. The segment at Gly11 to Trp33 is involved in apical transport and lipid raft association. Residues Asn28 to Lys454 lie on the Virion surface side of the membrane. A hypervariable stalk region region spans residues His36 to Ser75. N-linked (GlcNAc...) asparagine; by host glycans are attached at residues Asn44, Asn58, and Asn73. The head of neuraminidase stretch occupies residues Leu76–Lys454. Cystine bridges form between Cys77/Cys402, Cys109/Cys114, Cys169/Cys216, Cys218/Cys223, Cys264/Cys277, Cys266/Cys275, Cys303/Cys320, and Cys406/Cys431. Residue Arg103 coordinates substrate. The N-linked (GlcNAc...) asparagine; by host glycan is linked to Asn131. The active-site Proton donor/acceptor is Asp136. Residue Arg137 coordinates substrate. N-linked (GlcNAc...) asparagine; by host glycosylation is present at Asn220. Position 262–263 (Glu262–Glu263) interacts with substrate. Residue Arg278 participates in substrate binding. Residues Asp279, Gly283, Asp309, and Asn329 each contribute to the Ca(2+) site. Arg353 is a binding site for substrate. The active-site Nucleophile is the Tyr387.

Belongs to the glycosyl hydrolase 34 family. As to quaternary structure, homotetramer. Ca(2+) is required as a cofactor. N-glycosylated.

The protein resides in the virion membrane. It is found in the host apical cell membrane. The enzyme catalyses Hydrolysis of alpha-(2-&gt;3)-, alpha-(2-&gt;6)-, alpha-(2-&gt;8)- glycosidic linkages of terminal sialic acid residues in oligosaccharides, glycoproteins, glycolipids, colominic acid and synthetic substrates.. With respect to regulation, inhibited by the neuraminidase inhibitors zanamivir (Relenza) and oseltamivir (Tamiflu). These drugs interfere with the release of progeny virus from infected cells and are effective against all influenza strains. Resistance to neuraminidase inhibitors is quite rare. Functionally, catalyzes the removal of terminal sialic acid residues from viral and cellular glycoconjugates. Cleaves off the terminal sialic acids on the glycosylated HA during virus budding to facilitate virus release. Additionally helps virus spread through the circulation by further removing sialic acids from the cell surface. These cleavages prevent self-aggregation and ensure the efficient spread of the progeny virus from cell to cell. Otherwise, infection would be limited to one round of replication. Described as a receptor-destroying enzyme because it cleaves a terminal sialic acid from the cellular receptors. May facilitate viral invasion of the upper airways by cleaving the sialic acid moieties on the mucin of the airway epithelial cells. Likely to plays a role in the budding process through its association with lipid rafts during intracellular transport. May additionally display a raft-association independent effect on budding. Plays a role in the determination of host range restriction on replication and virulence. Sialidase activity in late endosome/lysosome traffic seems to enhance virus replication. This chain is Neuraminidase, found in Aves (Human).